We begin with the raw amino-acid sequence, 282 residues long: Type 1 encapsulin shell protein (282 aa).

It belongs to the encapsulin family. Family 1 subfamily. As to quaternary structure, initially thought to form a 180 subunit shell. Forms hollow shells composed of 240 subunits, making a shell about 42-43 nm in diameter. The monomer is capable of assuming 4 different conformations which allows packaging into the icosahedron. The shell has 12 pentameric and 30 hexameric capsomers which form the vertices and faces of the icosahedral nanocompartment.

Its subcellular location is the encapsulin nanocompartment. Functionally, shell component of a type 1 encapsulin nanocompartment. Assembles into proteinaceous icosahedral shells 42-43 nm in diameter with an iron- and phosphorus-rich core (1Fe:1.1P) which can store over 23,000-35,000 iron atoms (with a calculated maximum of 83,000 Fe). There are 2 types of negatively charged open pores in the cryo-electron structure; a 3-fold pore where 3 hexamers meet with a minimal size of 7.2 Angstroms and a 5-fold pore where pentamers meet with a minimal size of 2.3 Angstroms. The 2-fold pore seen in other encapsulin nanocompartments is closed. Empty compartments can be generated in E.coli. Both types of pore have extra density in their centers in the structure. 2 different cargo proteins have been identified (IMEF and Fer); when both are expressed in E.coli with the shell protein only IMEF is detected within the nanocompartment. E.coli expressing all 3 genes stores the largest amount of iron and is protected from Fe/H2O2-induced oxidative stress. Part of the iron-mineralizing encapsulin-associated Firmicute (IMEF) system. The polypeptide is Type 1 encapsulin shell protein (Bacillus thermotolerans (Quasibacillus thermotolerans)).